A 545-amino-acid polypeptide reads, in one-letter code: MDFKRLTAFFAIALVIMIGWEKMFPTPKPVPAPQQTAQQQAVTASAEAALAPATPITVTTDTVQAVIDEKSGDLRRLTLLKYKATGDENKPFILFGDGKEYTYVAQSELLDAQGNNILKGIGFSAPKKQYSLEGDKVEVRLSAPETRGLKIDKVYTFTKGSYLVNVRFDIANGSGQTANLSADYRIVRDHSEPEGQGYFTHSYVGPVVYTPEGNFQKVSFSDLDDDAKSGKSEAEYIRKTPTGWLGMIEHHFMSTWILQPKGGQSVCAAGDCRIDIKRRNDKLYSTSVSVPLAAIQNGAKSEASINLYAGPQTTSVIANIADNLQLAKDYGKVHWFASPLFWLLNQLHNIIGNWGWAIIVLTIIVKAVLYPLTNASYRSMAKMRAAAPKLQAIKEKYGDDRMAQQQAMMQLYTDEKINPLGGCLPMLLQIPVFIGLYWALFASVELRQAPWLGWITDLSRADPYYILPIIMAATMFAQTYLNPPPTDPMQAKMMKIMPLVFSVMFFFFPAGLVLYWVVNNLLTIAQQWHINRSIEKQRAQGEVVS.

The next 4 membrane-spanning stretches (helical) occupy residues 350–370 (IIGN…AVLY), 424–444 (LPML…FASV), 461–481 (ADPY…QTYL), and 498–518 (PLVF…YWVV).

This sequence belongs to the OXA1/ALB3/YidC family. Type 1 subfamily. As to quaternary structure, interacts with the Sec translocase complex via SecD. Specifically interacts with transmembrane segments of nascent integral membrane proteins during membrane integration.

It is found in the cell inner membrane. In terms of biological role, required for the insertion and/or proper folding and/or complex formation of integral membrane proteins into the membrane. Involved in integration of membrane proteins that insert both dependently and independently of the Sec translocase complex, as well as at least some lipoproteins. Aids folding of multispanning membrane proteins. The protein is Membrane protein insertase YidC of Neisseria meningitidis serogroup C (strain 053442).